Here is a 1405-residue protein sequence, read N- to C-terminus: DNA-directed RNA polymerase subunit beta' (1405 aa).

Zn(2+)-binding residues include cysteine 65, cysteine 67, cysteine 80, and cysteine 83. The Mg(2+) site is built by aspartate 468, aspartate 470, and aspartate 472. Zn(2+) is bound by residues cysteine 811, cysteine 885, cysteine 892, and cysteine 895.

It belongs to the RNA polymerase beta' chain family. The RNAP catalytic core consists of 2 alpha, 1 beta, 1 beta' and 1 omega subunit. When a sigma factor is associated with the core the holoenzyme is formed, which can initiate transcription. Requires Mg(2+) as cofactor. It depends on Zn(2+) as a cofactor.

The catalysed reaction is RNA(n) + a ribonucleoside 5'-triphosphate = RNA(n+1) + diphosphate. Its function is as follows. DNA-dependent RNA polymerase catalyzes the transcription of DNA into RNA using the four ribonucleoside triphosphates as substrates. The sequence is that of DNA-directed RNA polymerase subunit beta' from Azobacteroides pseudotrichonymphae genomovar. CFP2.